The primary structure comprises 195 residues: ATP-dependent Clp protease proteolytic subunit (195 aa).

Ser-101 acts as the Nucleophile in catalysis. His-126 is a catalytic residue.

This sequence belongs to the peptidase S14 family. Component of the chloroplastic Clp protease core complex.

Its subcellular location is the plastid. It localises to the chloroplast stroma. The enzyme catalyses Hydrolysis of proteins to small peptides in the presence of ATP and magnesium. alpha-casein is the usual test substrate. In the absence of ATP, only oligopeptides shorter than five residues are hydrolyzed (such as succinyl-Leu-Tyr-|-NHMec, and Leu-Tyr-Leu-|-Tyr-Trp, in which cleavage of the -Tyr-|-Leu- and -Tyr-|-Trp bonds also occurs).. Functionally, cleaves peptides in various proteins in a process that requires ATP hydrolysis. Has a chymotrypsin-like activity. Plays a major role in the degradation of misfolded proteins. The chain is ATP-dependent Clp protease proteolytic subunit from Cucumis sativus (Cucumber).